The primary structure comprises 295 residues: Small ribosomal subunit protein uS2 (295 aa).

Ser2 is modified (N-acetylserine). Phosphoserine is present on Ser43. The residue at position 52 (Lys52) is an N6-acetyllysine. Positions 54-113 (TWEKLLLAARAIVAIENPADVSVISSRNTGQRAVLKFAAATGATPIAGRFTPGTFTNQIQ) are interaction with PPP1R16B. Residue Lys89 is modified to N6-acetyllysine; alternate. Residue Lys89 forms a Glycyl lysine isopeptide (Lys-Gly) (interchain with G-Cter in SUMO2); alternate linkage. Phosphothreonine is present on Thr97. Laminin-binding stretches follow at residues 161-180 (IPCNNKGAHSVGLMWWMLAR) and 205-229 (RDPEEIEKEEQAAAEKAVTKEEFQG). Positions 214–227 (EQAAAEKAVTKEEF) are enriched in basic and acidic residues. The tract at residues 214 to 240 (EQAAAEKAVTKEEFQGEWTAPAPEFTA) is disordered. [DE]-W-[ST] repeat units lie at residues 230-232 (EWT), 247-249 (DWS), 266-268 (DWS), and 275-277 (DWS). Positions 242–295 (QPEVADWSEGVQVPSVPIQQFPTEDWSARPFTEDWSAAPTAQATEWVGTTSELS) are laminin-binding. The segment at 263 to 295 (PTEDWSARPFTEDWSAAPTAQATEWVGTTSELS) is disordered. Over residues 280-295 (PTAQATEWVGTTSELS) the composition is skewed to polar residues.

It belongs to the universal ribosomal protein uS2 family. In terms of assembly, monomer (37LRP) and homodimer (67LR). Component of the small ribosomal subunit. Mature ribosomes consist of a small (40S) and a large (60S) subunit. The 40S subunit contains about 33 different proteins and 1 molecule of RNA (18S). The 60S subunit contains about 49 different proteins and 3 molecules of RNA (28S, 5.8S and 5S). Interacts with RPS21. Interacts with several laminins including at least LAMB1. Interacts with MDK. The mature dimeric form interacts with PPP1R16B (via its fourth ankyrin repeat). Interacts with PPP1CA only in the presence of PPP1R16B. In terms of processing, acylated. Acylation may be a prerequisite for conversion of the monomeric 37 kDa laminin receptor precursor (37LRP) to the mature dimeric 67 kDa laminin receptor (67LR), and may provide a mechanism for membrane association. Cleaved by stromelysin-3 (ST3) at the cell surface. Cleavage by stromelysin-3 may be a mechanism to alter cell-extracellular matrix interactions.

It localises to the cell membrane. It is found in the cytoplasm. The protein resides in the nucleus. Functionally, required for the assembly and/or stability of the 40S ribosomal subunit. Required for the processing of the 20S rRNA-precursor to mature 18S rRNA in a late step of the maturation of 40S ribosomal subunits. Also functions as a cell surface receptor for laminin. Plays a role in cell adhesion to the basement membrane and in the consequent activation of signaling transduction pathways. May play a role in cell fate determination and tissue morphogenesis. Also acts as a receptor for several other ligands, including the pathogenic prion protein, viruses, and bacteria. Acts as a PPP1R16B-dependent substrate of PPP1CA. The sequence is that of Small ribosomal subunit protein uS2 from Ovis aries (Sheep).